The sequence spans 432 residues: 3-phosphoshikimate 1-carboxyvinyltransferase (432 aa).

3 residues coordinate 3-phosphoshikimate: Lys22, Ser23, and Arg27. Lys22 provides a ligand contact to phosphoenolpyruvate. 2 residues coordinate phosphoenolpyruvate: Gly96 and Arg127. Residues Ser173, Ser174, Gln175, Ser201, Asp316, Asn339, and Lys343 each contribute to the 3-phosphoshikimate site. Gln175 lines the phosphoenolpyruvate pocket. Catalysis depends on Asp316, which acts as the Proton acceptor. 3 residues coordinate phosphoenolpyruvate: Arg347, Arg391, and Lys416.

It belongs to the EPSP synthase family. As to quaternary structure, monomer.

The protein localises to the cytoplasm. It carries out the reaction 3-phosphoshikimate + phosphoenolpyruvate = 5-O-(1-carboxyvinyl)-3-phosphoshikimate + phosphate. It functions in the pathway metabolic intermediate biosynthesis; chorismate biosynthesis; chorismate from D-erythrose 4-phosphate and phosphoenolpyruvate: step 6/7. Functionally, catalyzes the transfer of the enolpyruvyl moiety of phosphoenolpyruvate (PEP) to the 5-hydroxyl of shikimate-3-phosphate (S3P) to produce enolpyruvyl shikimate-3-phosphate and inorganic phosphate. The polypeptide is 3-phosphoshikimate 1-carboxyvinyltransferase (Actinobacillus pleuropneumoniae serotype 7 (strain AP76)).